Reading from the N-terminus, the 265-residue chain is ClpXP adapter protein SpxH (265 aa).

It belongs to the SpxH family. Interacts with Spx.

The protein resides in the cytoplasm. Its function is as follows. Adapter protein required for efficient degradation of Spx by ClpXP under non-stress conditions. Interaction with Spx stabilizes Spx and exposes the C-terminus of Spx for recognition and proteolysis by ClpXP. The protein is ClpXP adapter protein SpxH of Staphylococcus epidermidis (strain ATCC 35984 / DSM 28319 / BCRC 17069 / CCUG 31568 / BM 3577 / RP62A).